The chain runs to 80 residues: Acyl carrier protein (80 aa).

The Carrier domain occupies 3–78 (DDTFSRIQSI…QVLEYIEAES (76 aa)). Ser38 is subject to O-(pantetheine 4'-phosphoryl)serine.

The protein belongs to the acyl carrier protein (ACP) family. 4'-phosphopantetheine is transferred from CoA to a specific serine of apo-ACP by AcpS. This modification is essential for activity because fatty acids are bound in thioester linkage to the sulfhydryl of the prosthetic group.

It localises to the plastid. The protein localises to the chloroplast. It participates in lipid metabolism; fatty acid biosynthesis. In terms of biological role, carrier of the growing fatty acid chain in fatty acid biosynthesis. The polypeptide is Acyl carrier protein (Trieres chinensis (Marine centric diatom)).